A 756-amino-acid chain; its full sequence is Serine/threonine-protein kinase CBK1 (756 aa).

Disordered regions lie at residues 1–180 (MYNS…SYSS) and 242–261 (QQQQ…NNGT). Over residues 23-34 (QQQDQQHQQQQQ) the composition is skewed to low complexity. Residues 53–77 (FSSNYMKEQGSHQSLQEHLQRETGN) are compositionally biased toward polar residues. T109 is subject to Phosphothreonine. Residues 120-180 (HNNNSQSMVQ…TLRSNGSYSS (61 aa)) are compositionally biased toward polar residues. Positions 242 to 255 (QQQQQQQSQSPVQS) are enriched in low complexity. Residues 352 to 672 (FHTVKVIGKG…ADEIKSHPFF (321 aa)) enclose the Protein kinase domain. ATP is bound by residues 358–366 (IGKGAFGEV) and K381. Residue D475 is the Proton acceptor of the active site. Residues 673-754 (RGVDWNTIRQ…SRFDYLTRKN (82 aa)) form the AGC-kinase C-terminal domain. The interval 707 to 732 (NVPDSPAMAQAAKQREQMTKQGGSAP) is disordered.

It belongs to the protein kinase superfamily. STE Ser/Thr protein kinase family. COT1 subfamily. As to quaternary structure, associates with PAG1/TAO3 and interacts with MOB2.

The enzyme catalyses L-seryl-[protein] + ATP = O-phospho-L-seryl-[protein] + ADP + H(+). It catalyses the reaction L-threonyl-[protein] + ATP = O-phospho-L-threonyl-[protein] + ADP + H(+). Its function is as follows. Protein kinase that seems to play a role in the regulation of cell morphogenesis and proliferation. This Saccharomyces cerevisiae (strain ATCC 204508 / S288c) (Baker's yeast) protein is Serine/threonine-protein kinase CBK1 (CBK1).